We begin with the raw amino-acid sequence, 348 residues long: Peptidyl-Lys metalloendopeptidase (348 aa).

Residues 1-18 (MFSSVMVALVSLAVAVSA) form the signal peptide. Positions 19 to 181 (NPGLSLKVSG…RATPTLTRPV (163 aa)) are excised as a propeptide. 2 disulfides stabilise this stretch: Cys-186-Cys-256 and Cys-258-Cys-278. The O-linked (Man) threonine; partial glycan is linked to Thr-223. Position 298 (His-298) interacts with Zn(2+). The active site involves Glu-299. Zn(2+) is bound by residues His-302 and Asp-311.

Zn(2+) serves as cofactor.

It localises to the secreted. The catalysed reaction is Preferential cleavage in proteins: -Xaa-|-Lys- (in which Xaa may be Pro).. Its activity is regulated as follows. Inhibited by chelating agents such as EDTA and 1,10-phenanthroline. In Grifola frondosa (Maitake), this protein is Peptidyl-Lys metalloendopeptidase (MEP).